A 497-amino-acid polypeptide reads, in one-letter code: Cytochrome P450 71A16 (497 aa).

The helical transmembrane segment at 1–21 (MEMMILISLCLTTFLTILLFF) threads the bilayer. Cys-439 is a binding site for heme.

Belongs to the cytochrome P450 family. Heme is required as a cofactor.

It localises to the membrane. In terms of biological role, possesses triterpene oxidizing activity. Catalyzes the C23 hydroxylation of marneral to form 23-hydroxymarneral. Catalyzes the C23 hydroxylation of marnerol to form 23-hydroxymarnerol. The sequence is that of Cytochrome P450 71A16 (CYP71A16) from Arabidopsis thaliana (Mouse-ear cress).